The following is a 348-amino-acid chain: S-adenosylmethionine-dependent nucleotide dehydratase RSAD2 (348 aa).

The region spanning 56 to 276 (SATPSSVNYH…LERHSSISCL (221 aa)) is the Radical SAM core domain. Positions 70, 74, and 77 each coordinate [4Fe-4S] cluster.

Belongs to the radical SAM superfamily. RSAD2 family. It depends on [4Fe-4S] cluster as a cofactor. As to expression, expressed at low levels in spleen and head kidney.

It localises to the endoplasmic reticulum membrane. Its function is as follows. Interferon-inducible iron-sulfur (4FE-4S) cluster-binding antiviral protein which plays a major role in the cell antiviral state induced by type I and type II interferon. The polypeptide is S-adenosylmethionine-dependent nucleotide dehydratase RSAD2 (Oncorhynchus mykiss (Rainbow trout)).